Consider the following 603-residue polypeptide: Extracellular basic protease (603 aa).

The signal sequence occupies residues 1–21 (MNLSNISAVKVLTLVVSAAIA). Residues 22–132 (GQVCAAESIV…VEVDRLAYPK (111 aa)) constitute a propeptide that is removed on maturation. The Peptidase S8 domain occupies 143–468 (QWHYFGNYGV…SGIVDANAAV (326 aa)). Asp-173 functions as the Charge relay system in the catalytic mechanism. The segment at 197–221 (PNARDGDQRDNNPADEGDWFDNWDC) is disordered. 2 cysteine pairs are disulfide-bonded: Cys-221-Cys-273 and Cys-315-Cys-352. His-237 (charge relay system) is an active-site residue. Ser-409 serves as the catalytic Charge relay system. The propeptide occupies 477–603 (RAQPRPPVNQ…GSIDSWSLTF (127 aa)). One can recognise a P/Homo B domain in the interval 478 to 603 (AQPRPPVNQP…GSIDSWSLTF (126 aa)).

Belongs to the peptidase S8 family.

The protein localises to the secreted. The protein is Extracellular basic protease (bprV) of Dichelobacter nodosus (Bacteroides nodosus).